The primary structure comprises 413 residues: Multifunctional CCA protein (413 aa).

Residues glycine 8 and arginine 11 each coordinate ATP. CTP contacts are provided by glycine 8 and arginine 11. Aspartate 21 and aspartate 23 together coordinate Mg(2+). The ATP site is built by arginine 91, arginine 137, and arginine 140. Arginine 91, arginine 137, and arginine 140 together coordinate CTP. One can recognise an HD domain in the interval threonine 228–tryptophan 329.

It belongs to the tRNA nucleotidyltransferase/poly(A) polymerase family. Bacterial CCA-adding enzyme type 1 subfamily. As to quaternary structure, monomer. Can also form homodimers and oligomers. Mg(2+) is required as a cofactor. Requires Ni(2+) as cofactor.

The catalysed reaction is a tRNA precursor + 2 CTP + ATP = a tRNA with a 3' CCA end + 3 diphosphate. It carries out the reaction a tRNA with a 3' CCA end + 2 CTP + ATP = a tRNA with a 3' CCACCA end + 3 diphosphate. In terms of biological role, catalyzes the addition and repair of the essential 3'-terminal CCA sequence in tRNAs without using a nucleic acid template. Adds these three nucleotides in the order of C, C, and A to the tRNA nucleotide-73, using CTP and ATP as substrates and producing inorganic pyrophosphate. tRNA 3'-terminal CCA addition is required both for tRNA processing and repair. Also involved in tRNA surveillance by mediating tandem CCA addition to generate a CCACCA at the 3' terminus of unstable tRNAs. While stable tRNAs receive only 3'-terminal CCA, unstable tRNAs are marked with CCACCA and rapidly degraded. This is Multifunctional CCA protein from Salmonella typhimurium (strain LT2 / SGSC1412 / ATCC 700720).